Consider the following 803-residue polypeptide: Leucine--tRNA ligase (803 aa).

A 'HIGH' region motif is present at residues 40–51 (PYPSGAGLHVGH). A 'KMSKS' region motif is present at residues 575-579 (KMSKS). Lys578 serves as a coordination point for ATP.

The protein belongs to the class-I aminoacyl-tRNA synthetase family.

The protein localises to the cytoplasm. The catalysed reaction is tRNA(Leu) + L-leucine + ATP = L-leucyl-tRNA(Leu) + AMP + diphosphate. This chain is Leucine--tRNA ligase, found in Listeria monocytogenes serotype 4b (strain F2365).